Reading from the N-terminus, the 129-residue chain is uncharacterized protein (129 aa).

The disordered stretch occupies residues 44 to 63; that stretch reads PYRAADRSNDQDNDRSGGNV. The span at 46–58 shows a compositional bias: basic and acidic residues; it reads RAADRSNDQDNDR. A run of 2 helical transmembrane segments spans residues 78–98 and 109–129; these read IISLFVLPVLLGAAGIIVGYI and AWAMGIGVVSLVLGIFIIPFF.

Its subcellular location is the cell membrane. This is an uncharacterized protein from Bacillus subtilis (strain 168).